The following is a 472-amino-acid chain: ATP synthase subunit beta (472 aa).

Gly149–Thr156 contributes to the ATP binding site.

Belongs to the ATPase alpha/beta chains family. F-type ATPases have 2 components, CF(1) - the catalytic core - and CF(0) - the membrane proton channel. CF(1) has five subunits: alpha(3), beta(3), gamma(1), delta(1), epsilon(1). CF(0) has three main subunits: a(1), b(2) and c(9-12). The alpha and beta chains form an alternating ring which encloses part of the gamma chain. CF(1) is attached to CF(0) by a central stalk formed by the gamma and epsilon chains, while a peripheral stalk is formed by the delta and b chains.

Its subcellular location is the cell inner membrane. The catalysed reaction is ATP + H2O + 4 H(+)(in) = ADP + phosphate + 5 H(+)(out). Produces ATP from ADP in the presence of a proton gradient across the membrane. The catalytic sites are hosted primarily by the beta subunits. The sequence is that of ATP synthase subunit beta from Pelagibacter ubique (strain HTCC1062).